Reading from the N-terminus, the 102-residue chain is Small ribosomal subunit protein uS10 (102 aa).

Belongs to the universal ribosomal protein uS10 family. In terms of assembly, part of the 30S ribosomal subunit.

Involved in the binding of tRNA to the ribosomes. This Methanothrix thermoacetophila (strain DSM 6194 / JCM 14653 / NBRC 101360 / PT) (Methanosaeta thermophila) protein is Small ribosomal subunit protein uS10.